A 284-amino-acid chain; its full sequence is Nucleotide-binding protein VF_0384 (284 aa).

8–15 (GSSGAGKS) is an ATP binding site. 56-59 (DIRN) lines the GTP pocket.

It belongs to the RapZ-like family.

Displays ATPase and GTPase activities. This chain is Nucleotide-binding protein VF_0384, found in Aliivibrio fischeri (strain ATCC 700601 / ES114) (Vibrio fischeri).